The primary structure comprises 210 residues: Translation initiation factor IF-3 (210 aa).

The disordered stretch occupies residues 169–210 (APKQAPAPKKERTEESAEKAGSAGETEPVPAASAAAEAPANV). Residues 176 to 186 (PKKERTEESAE) are compositionally biased toward basic and acidic residues. The span at 187–210 (KAGSAGETEPVPAASAAAEAPANV) shows a compositional bias: low complexity.

This sequence belongs to the IF-3 family. Monomer.

The protein resides in the cytoplasm. In terms of biological role, IF-3 binds to the 30S ribosomal subunit and shifts the equilibrium between 70S ribosomes and their 50S and 30S subunits in favor of the free subunits, thus enhancing the availability of 30S subunits on which protein synthesis initiation begins. This Deinococcus deserti (strain DSM 17065 / CIP 109153 / LMG 22923 / VCD115) protein is Translation initiation factor IF-3.